The chain runs to 668 residues: MSQAISLTFPDGSVRSFPAGATGKDVAESISKSLAKSAVAIAIDGAVRDLSDAVTDGKIEIITRKDGRALELIRHDAAHVMAEAVQELWPGTQVTIGPVIENGFYYDFAKNEPFTPDDLPKIEKKMKEIIARNAPFTKQIWSREKAKEVFAAKGEQYKVELVDAIPEGQDLKIYHQGDWFDLCRGPHMASTGQVGTAFKLMKVAGAYWRGDSNNAMLSRIYGTAWADQADLDNYLHMLAEAEKRDHRKLGREMDLFHFQEEGPGVVFWHGKGWRIFQTLVAYMRRRLAADYQEVNAPQVLDTSLWETSGHWGWYQENMFAVKSAHAMTHPEDKEADNRVFALKPMNCPGHVQIFKHGLKSYRELPIRLAEFGLVHRYEPSGALHGLMRVRGFTQDDAHIFCTDEQMAAECLKINDLILSVYEDFGFKEIVVKLSTRPEKRVGSDALWDRAEAVMTDVLKTIEAQSEGRIKTGILPGEGAFYGPKFEYTLKDAIGREWQCGTTQVDFNLPERFGAFYIDSNSEKTQPVMIHRAICGSMERFLGILIENFAGHMPLWVSPLQVVVATITSEADAYGLEVAEALRDAGLNVETDFRNEKINYKIREHSVTKVPVIIVCGRKEAEERTVNIRRLGSQDQVSMGLDAAVESLTLEATPPDIRRKAEAKKAKAA.

The TGS domain occupies 1-64 (MSQAISLTFP…TDGKIEIITR (64 aa)). A catalytic region spans residues 245–553 (DHRKLGREMD…LIENFAGHMP (309 aa)). Zn(2+) contacts are provided by Cys-347, His-398, and His-530.

This sequence belongs to the class-II aminoacyl-tRNA synthetase family. In terms of assembly, homodimer. The cofactor is Zn(2+).

The protein localises to the cytoplasm. The catalysed reaction is tRNA(Thr) + L-threonine + ATP = L-threonyl-tRNA(Thr) + AMP + diphosphate + H(+). Functionally, catalyzes the attachment of threonine to tRNA(Thr) in a two-step reaction: L-threonine is first activated by ATP to form Thr-AMP and then transferred to the acceptor end of tRNA(Thr). Also edits incorrectly charged L-seryl-tRNA(Thr). The chain is Threonine--tRNA ligase from Rhizobium etli (strain CIAT 652).